The primary structure comprises 496 residues: Probable uroporphyrinogen-III C-methyltransferase (496 aa).

Belongs to the precorrin methyltransferase family.

It catalyses the reaction uroporphyrinogen III + 2 S-adenosyl-L-methionine = precorrin-2 + 2 S-adenosyl-L-homocysteine + H(+). Its function is as follows. Siroheme synthase involved in methionine biosynthesis. The sequence is that of Probable uroporphyrinogen-III C-methyltransferase from Schizosaccharomyces pombe (strain 972 / ATCC 24843) (Fission yeast).